Reading from the N-terminus, the 143-residue chain is Transcriptional regulatory protein RosR (143 aa).

The segment at 79–97 adopts a C2H3-type zinc-finger fold; the sequence is CLECGGNFKSLKRHLMTHH.

Belongs to the ros/MucR family.

This Rhizobium etli (strain ATCC 51251 / DSM 11541 / JCM 21823 / NBRC 15573 / CFN 42) protein is Transcriptional regulatory protein RosR (rosR).